We begin with the raw amino-acid sequence, 339 residues long: GTP 3',8-cyclase (339 aa).

One can recognise a Radical SAM core domain in the interval Asn-20 to Asp-241. Arg-29 serves as a coordination point for GTP. The [4Fe-4S] cluster site is built by Cys-36 and Cys-40. Residue Tyr-42 coordinates S-adenosyl-L-methionine. Residue Cys-43 coordinates [4Fe-4S] cluster. Position 78 (Arg-78) interacts with GTP. Residue Gly-82 coordinates S-adenosyl-L-methionine. Thr-109 contacts GTP. Position 133 (Ser-133) interacts with S-adenosyl-L-methionine. Lys-170 contributes to the GTP binding site. Met-204 contacts S-adenosyl-L-methionine. [4Fe-4S] cluster-binding residues include Cys-267 and Cys-270. Arg-272–Arg-274 serves as a coordination point for GTP. Cys-284 contacts [4Fe-4S] cluster.

The protein belongs to the radical SAM superfamily. MoaA family. Monomer and homodimer. [4Fe-4S] cluster serves as cofactor.

It carries out the reaction GTP + AH2 + S-adenosyl-L-methionine = (8S)-3',8-cyclo-7,8-dihydroguanosine 5'-triphosphate + 5'-deoxyadenosine + L-methionine + A + H(+). Its pathway is cofactor biosynthesis; molybdopterin biosynthesis. In terms of biological role, catalyzes the cyclization of GTP to (8S)-3',8-cyclo-7,8-dihydroguanosine 5'-triphosphate. This Psychromonas ingrahamii (strain DSM 17664 / CCUG 51855 / 37) protein is GTP 3',8-cyclase.